The chain runs to 285 residues: Nucleotide-binding protein PFL_0912 (285 aa).

8–15 (GRSGSGKS) serves as a coordination point for ATP. 60–63 (DARN) contacts GTP.

Belongs to the RapZ-like family.

Functionally, displays ATPase and GTPase activities. In Pseudomonas fluorescens (strain ATCC BAA-477 / NRRL B-23932 / Pf-5), this protein is Nucleotide-binding protein PFL_0912.